A 435-amino-acid polypeptide reads, in one-letter code: Keratin, type I cytoskeletal 18 (435 aa).

The span at 1–28 shows a compositional bias: low complexity; it reads MSLRSSYSVRSSTSQVPVSQMSQMSQMS. Residues 1 to 36 form a disordered region; the sequence is MSLRSSYSVRSSTSQVPVSQMSQMSQMSIKRTTNVP. Residues 2–88 are head; the sequence is SLRSSYSVRS…TGATGDIMGN (87 aa). Residues 89–123 form a coil 1A region; it reads EKMAMQNLNDRLASYLRSETLEQANSKLELKIREA. The region spanning 89 to 399 is the IF rod domain; it reads EKMAMQNLND…RLLDGGDFKL (311 aa). The segment at 124-140 is linker 1; it reads LEKKGPEVCDYSRFQPI. Residues 141–232 form a coil 1B region; the sequence is IDDLRRKIFD…KNHDNEVMEL (92 aa). A linker 12 region spans residues 233 to 256; the sequence is RNQISHSGVQVDVDAPKGQDLAKI. The tract at residues 257–394 is coil 2; the sequence is MEEIRSKYEK…IATYRRLLDG (138 aa). The tract at residues 395-435 is tail; sequence GDFKLQDALEEQKRVKVMTVTQTLVDGKVVSSSTETKEKKF.

This sequence belongs to the intermediate filament family. Heterotetramer of two type I and two type II keratins. Keratin-18 associates with keratin-8. In terms of processing, phosphorylated. Post-translationally, proteolytically cleaved by caspases during epithelial cell apoptosis. In terms of tissue distribution, abundantly expressed in an even distribution throughout the optic nerve, localizing specifically to the astrocyte domains. Moderately expressed in spinal cord, brain, liver and oocytes.

In terms of biological role, when phosphorylated, plays a role in filament reorganization. In Carassius auratus (Goldfish), this protein is Keratin, type I cytoskeletal 18 (krt18).